The following is an 84-amino-acid chain: MSEFWLCFNCCIAEQPQPKRRRRIDRSMIGEPTNFVHTAHVGSGDLFSGMNSVSSIQNQMQSKGGYGGGMPANVQMQLVDTKAG.

2 S-palmitoyl cysteine lipidation sites follow: Cys-10 and Cys-11. The 14-residue stretch at 29 to 42 (IGEPTNFVHTAHVG) folds into the CRIB domain. Phosphoserine occurs at positions 43 and 52.

This sequence belongs to the CDC42SE/SPEC family. As to quaternary structure, interacts with CDC42 (in GTP-bound form). Interacts weakly with RAC1 and not at all with RHOA. As to expression, widely expressed. Expressed at higher level in T-lymphocytes. Highly expressed in CCRF-CEM T-lymphocytes, Jurkat T-lymphocytes, and Raji B-lymphocytes compared (at protein level).

The protein resides in the cytoplasm. It localises to the cytoskeleton. Its subcellular location is the cell membrane. It is found in the cell projection. The protein localises to the phagocytic cup. Probably involved in the organization of the actin cytoskeleton by acting downstream of CDC42, inducing actin filament assembly. Alters CDC42-induced cell shape changes. In activated T-cells, may play a role in CDC42-mediated F-actin accumulation at the immunological synapse. May play a role in early contractile events in phagocytosis in macrophages. In Homo sapiens (Human), this protein is CDC42 small effector protein 2 (CDC42SE2).